The following is a 150-amino-acid chain: uncharacterized protein (150 aa).

This is an uncharacterized protein from Azospirillum brasilense.